Here is a 308-residue protein sequence, read N- to C-terminus: UDP-N-acetylenolpyruvoylglucosamine reductase (308 aa).

An FAD-binding PCMH-type domain is found at 32 to 196; it reads VGGPAARLYK…ISAKLQLSPG (165 aa). Residue Arg176 is part of the active site. The Proton donor role is filled by Ser225. Glu296 is an active-site residue.

This sequence belongs to the MurB family. FAD is required as a cofactor.

It localises to the cytoplasm. It catalyses the reaction UDP-N-acetyl-alpha-D-muramate + NADP(+) = UDP-N-acetyl-3-O-(1-carboxyvinyl)-alpha-D-glucosamine + NADPH + H(+). Its pathway is cell wall biogenesis; peptidoglycan biosynthesis. Its function is as follows. Cell wall formation. This is UDP-N-acetylenolpyruvoylglucosamine reductase from Legionella pneumophila (strain Corby).